The sequence spans 336 residues: Isopentenyl-diphosphate delta-isomerase (336 aa).

5–6 contacts substrate; sequence RK. FMN contacts are provided by residues 60–62, S90, and N117; that span reads AMT. Substrate is bound at residue Q147. E148 contacts Mg(2+). Residues K179, S204, T209, 253–255, and 274–275 contribute to the FMN site; these read GVR and SR.

Belongs to the IPP isomerase type 2 family. As to quaternary structure, homooctamer. Dimer of tetramers. FMN is required as a cofactor. NADPH serves as cofactor. Requires Mg(2+) as cofactor.

It localises to the cytoplasm. It catalyses the reaction isopentenyl diphosphate = dimethylallyl diphosphate. In terms of biological role, involved in the biosynthesis of isoprenoids. Catalyzes the 1,3-allylic rearrangement of the homoallylic substrate isopentenyl (IPP) to its allylic isomer, dimethylallyl diphosphate (DMAPP). This chain is Isopentenyl-diphosphate delta-isomerase, found in Streptococcus pneumoniae serotype 4 (strain ATCC BAA-334 / TIGR4).